Reading from the N-terminus, the 376-residue chain is CCA-adding enzyme (376 aa).

2 residues coordinate ATP: Gly-23 and Arg-26. CTP-binding residues include Gly-23 and Arg-26. Positions 36 and 38 each coordinate Mg(2+). The ATP site is built by Arg-106, Arg-152, and Arg-155. Arg-106, Arg-152, and Arg-155 together coordinate CTP.

It belongs to the tRNA nucleotidyltransferase/poly(A) polymerase family. Bacterial CCA-adding enzyme type 2 subfamily. Requires Mg(2+) as cofactor.

It carries out the reaction a tRNA precursor + 2 CTP + ATP = a tRNA with a 3' CCA end + 3 diphosphate. The enzyme catalyses a tRNA with a 3' CCA end + 2 CTP + ATP = a tRNA with a 3' CCACCA end + 3 diphosphate. Catalyzes the addition and repair of the essential 3'-terminal CCA sequence in tRNAs without using a nucleic acid template. Adds these three nucleotides in the order of C, C, and A to the tRNA nucleotide-73, using CTP and ATP as substrates and producing inorganic pyrophosphate. tRNA 3'-terminal CCA addition is required both for tRNA processing and repair. Also involved in tRNA surveillance by mediating tandem CCA addition to generate a CCACCA at the 3' terminus of unstable tRNAs. While stable tRNAs receive only 3'-terminal CCA, unstable tRNAs are marked with CCACCA and rapidly degraded. This is CCA-adding enzyme from Coxiella burnetii (strain RSA 331 / Henzerling II).